The chain runs to 638 residues: Growth hormone receptor (638 aa).

The first 18 residues, 1–18 (MDLWQLLLTVALAGSSDA), serve as a signal peptide directing secretion. Topologically, residues 19–264 (FSGSEATPAT…SPFTCEEDFR (246 aa)) are extracellular. The interval 30-51 (GRASESVQRVHPGLGTNSSGKP) is disordered. N-linked (GlcNAc...) asparagine glycosylation occurs at N46. 2 cysteine pairs are disulfide-bonded: C56–C66 and C101–C112. N-linked (GlcNAc...) asparagine glycosylation occurs at N115. Residues C126 and C140 are joined by a disulfide bond. The Fibronectin type-III domain maps to 151–254 (PPIGLNWTLL…EVLYVTLPQM (104 aa)). N-linked (GlcNAc...) asparagine glycosylation is found at N156, N161, and N200. The WSXWS motif signature appears at 240 to 244 (YGEFS). Residues 260-262 (EED) form a required for ADAM17-mediated proteolysis region. A helical transmembrane segment spans residues 265-288 (FPWFLIIIFGIFGLTVMLFVFIFS). At 289 to 638 (KQQRIKMLIL…STDQLNKILP (350 aa)) the chain is on the cytoplasmic side. Residues 294–379 (KMLILPPVPV…HQKSLSVLAA (86 aa)) are required for JAK2 binding. Positions 297 to 305 (ILPPVPVPK) match the Box 1 motif motif. The UbE motif motif lies at 340 to 349 (DSWVEFIELD). S341 carries the post-translational modification Phosphoserine. Position 487 is a phosphotyrosine (Y487). Positions 573 to 592 (TTTAERSGTAEDAPGSEMPV) are disordered. Y595 bears the Phosphotyrosine mark.

Belongs to the type I cytokine receptor family. Type 1 subfamily. In terms of assembly, on growth hormone (GH) binding, forms homodimers and binds JAK2 via a box 1-containing domain. Post-translationally, the soluble form (GHBP) is produced by phorbol ester-promoted proteolytic cleavage at the cell surface (shedding) by ADAM17/TACE. Shedding is inhibited by growth hormone (GH) binding to the receptor probably due to a conformational change in GHR rendering the receptor inaccessible to ADAM17. In terms of processing, on GH binding, phosphorylated on tyrosine residues in the cytoplasmic domain by JAK2. Ubiquitinated by the ECS(SOCS2) complex following ligand-binding and phosphorylation by JAK2, leading to its degradation by the proteasome. Regulation by the ECS(SOCS2) complex acts as a negative feedback loop of growth hormone receptor signaling. Ubiquitination is not sufficient for GHR internalization.

It is found in the cell membrane. It localises to the secreted. Receptor for pituitary gland growth hormone involved in regulating postnatal body growth. On ligand binding, couples to, and activates the JAK2/STAT5 pathway. Functionally, the soluble form acts as a reservoir of growth hormone in plasma and may be a modulator/inhibitor of GH signaling. In Oryctolagus cuniculus (Rabbit), this protein is Growth hormone receptor.